A 269-amino-acid polypeptide reads, in one-letter code: MKLLLLLASVLCLALIVSARPSDETTDQESSTELSEDTSDSYHQEEDTSETGADAGTEDGNSEDDSSELESSSEEGHEDGSEDATGEEGGAGEKGEAGEEDEAGEEGEAGEEGEAGEEGGAGEEGGAGEEGGADEEGSAGEEGGAEGGEESPVNTYHQVHNLLKNIMNVGTKNNYLKSFILARLQERLMNPTIDLVGSISKYSKIKECFDSLADDVKSLVEKSETSYEECSKDKNNPHCGSEGTRELDEGLIEREQKLSDCIVEKRDSE.

Positions 1–19 (MKLLLLLASVLCLALIVSA) are cleaved as a signal peptide. The segment at 19 to 152 (ARPSDETTDQ…GGAEGGEESP (134 aa)) is disordered. A GE-rich region which mediates binding of Ca(2+) region spans residues 38–148 (TSDSYHQEED…AGEEGGAEGG (111 aa)). Composition is skewed to acidic residues over residues 56–73 (GTED…ESSS), 98–121 (GEED…EGGA), and 131–149 (GGAD…EGGE). The interval 148–269 (GEESPVNTYH…DCIVEKRDSE (122 aa)) is mediates binding of host collagen and inhibition of platelet aggregation. Cystine bridges form between cysteine 208/cysteine 261 and cysteine 230/cysteine 239.

The protein belongs to the aegyptin family. Female saliva (at protein level). Distal lateral lobes of female salivary gland (at protein level). Low-level expression in male salivary gland. Not detected in female and male carcasses.

The protein localises to the secreted. Modulates blood feeding of female mosquitoes on vertebrate hosts. Inhibits collagen-induced platelet aggregation in the host via preventing collagen interaction with its ligands: glycoprotein VI and integrin alpha-2/beta-1 (ITGA2/ITGB1). Inhibits collagen-induced increase of Ca(2+) levels in host platelets. Binds to host collagens. Binds Ca(2+). Prevents a decrease in platelet count in the host blood after collagen injection. Its function is as follows. (Microbial infection) Does not affect the development of Plasmodium berghei parasites in mosquitoes. This is Aegyptin-like protein from Anopheles stephensi (Indo-Pakistan malaria mosquito).